Consider the following 217-residue polypeptide: Uracil-DNA glycosylase (217 aa).

Residue aspartate 62 is the Proton acceptor of the active site.

Belongs to the uracil-DNA glycosylase (UDG) superfamily. UNG family.

The protein localises to the cytoplasm. The enzyme catalyses Hydrolyzes single-stranded DNA or mismatched double-stranded DNA and polynucleotides, releasing free uracil.. Its function is as follows. Excises uracil residues from the DNA which can arise as a result of misincorporation of dUMP residues by DNA polymerase or due to deamination of cytosine. The sequence is that of Uracil-DNA glycosylase from Streptococcus gordonii (strain Challis / ATCC 35105 / BCRC 15272 / CH1 / DL1 / V288).